The following is a 326-amino-acid chain: mRNA decay activator protein ZFP36 (326 aa).

Residues 1-15 form a necessary for nuclear export region; sequence MDLTAIYESLLSLSP. The segment at 1-100 is necessary and sufficient for the association with mRNA decay enzymes and mRNA decay activation; it reads MDLTAIYESL…PTSPTATSTT (100 aa). 2 necessary for localization of ARE-containing mRNAs to processing bodies (PBs) regions span residues 1–174 and 100–326; these read MDLT…DLAA and TPSR…SVSE. The segment at 13-66 is disordered; that stretch reads LSPDVPVPSDHGGTESSPGWGSSGPWSLSPSDSSPSGVTSRLPGRSTSLVEGRS. Over residues 28 to 49 the composition is skewed to low complexity; sequence SSPGWGSSGPWSLSPSDSSPSG. A Phosphoserine; by MAPKAPK2 modification is found at Ser60. Residue Ser66 is modified to Phosphoserine. A P-P-P-P-G repeat occupies 71–75; it reads PPPPG. A disordered region spans residues 78 to 102; the sequence is PLAPRLGPELSPSPTSPTATSTTPS. A phosphoserine mark is found at Ser88 and Ser90. At Thr92 the chain carries Phosphothreonine. Position 93 is a phosphoserine (Ser93). Residues 95–168 form a necessary for nuclear localization region; sequence TATSTTPSRY…GSRCHFIHNP (74 aa). Positions 97 to 173 are necessary for RNA-binding; sequence TSTTPSRYKT…FIHNPSEDLA (77 aa). C3H1-type zinc fingers lie at residues 103-131 and 141-169; these read RYKTELCRTFSESGRCRYGAKCQFAHGLG and KYKTELCHKFYLQGRCPYGSRCHFIHNPS. The tract at residues 103–194 is necessary for interaction with PABPN1; that stretch reads RYKTELCRTF…ISFSGLPSGR (92 aa). Ser169 bears the Phosphoserine mark. The tract at residues 174–326 is necessary for mRNA decay activation; it reads APGHPPVLRQ…PIFNRISVSE (153 aa). Disordered stretches follow at residues 175–245 and 273–292; these read PGHP…RRDP and SVQSLGSDPDEYASSGSSLG. Ser186 carries the phosphoserine; by MAPKAPK2 modification. Ser197 bears the Phosphoserine mark. Residues 198 to 202 form a P-P-P-P-G repeat; that stretch reads PPPPG. Over residues 204 to 216 the composition is skewed to low complexity; that stretch reads AGPSLSSSSFSPS. Residue Ser218 is modified to Phosphoserine. The P-P-P-P-G repeat unit spans residues 219–223; that stretch reads PPPPG. Phosphoserine; by MAPK1; in vitro is present on Ser228. Phosphoserine is present on residues Ser276, Ser296, and Ser323. The interval 312–326 is interaction with CNOT1; sequence APRRLPIFNRISVSE.

In terms of assembly, associates with cytoplasmic CCR4-NOT and PAN2-PAN3 deadenylase complexes to trigger ARE-containing mRNA deadenylation and decay processes. Part of a mRNA decay activation complex at least composed of poly(A)-specific exoribonucleases CNOT6, EXOSC2 and XRN1 and mRNA-decapping enzymes DCP1A and DCP2. Associates with the RNA exosome complex. Interacts (via phosphorylated form) with 14-3-3 proteins; these interactions promote exclusion of ZFP36 from cytoplasmic stress granules in response to arsenite treatment in a MAPKAPK2-dependent manner and does not prevent CCR4-NOT deadenylase complex recruitment or ZFP36-induced ARE-containing mRNA deadenylation and decay processes. Interacts with 14-3-3 proteins; these interactions occur in response to rapamycin in an Akt-dependent manner. Interacts with AGO2 and AGO4. Interacts (via C-terminus) with CNOT1; this interaction occurs in a RNA-independent manner and induces mRNA deadenylation. Interacts (via N-terminus) with CNOT6. Interacts with CNOT6L. Interacts (via C-terminus) with CNOT7; this interaction occurs in a RNA-independent manner, induces mRNA deadenylation and is inhibited in a phosphorylation MAPKAPK2-dependent manner. Interacts (via unphosphorylated form) with CNOT8; this interaction occurs in a RNA-independent manner and is inhibited in a phosphorylation MAPKAPK2-dependent manner. Interacts with DCP1A. Interacts (via N-terminus) with DCP2. Interacts with EDC3. Interacts (via N-terminus) with EXOSC2. Interacts with heat shock 70 kDa proteins. Interacts with KHSRP; this interaction increases upon cytokine-induced treatment. Interacts with MAP3K4; this interaction enhances the association with SH3KBP1/CIN85. Interacts with MAPKAPK2; this interaction occurs upon skeletal muscle satellite cell activation. Interacts with NCL. Interacts with NUP214; this interaction increases upon lipopolysaccharide (LPS) stimulation. Interacts with PABPC1; this interaction occurs in a RNA-dependent manner. Interacts (via hypophosphorylated form) with PABPN1 (via RRM domain and C-terminal arginine-rich region); this interaction occurs in the nucleus in a RNA-independent manner, decreases in presence of single-stranded poly(A) RNA-oligomer and in a p38 MAPK-dependent-manner and inhibits nuclear poly(A) tail synthesis. Interacts with PAN2. Interacts (via C3H1-type zinc finger domains) with PKM. Interacts (via C3H1-type zinc finger domains) with nuclear RNA poly(A) polymerase. Interacts with PPP2CA; this interaction occurs in LPS-stimulated cells and induces ZFP36 dephosphorylation, and hence may promote ARE-containing mRNAs decay. Interacts (via C-terminus) with PRR5L (via C-terminus); this interaction may accelerate ZFP36-mediated mRNA decay during stress. Interacts (via C-terminus) with SFN; this interaction occurs in a phosphorylation-dependent manner. Interacts (via extreme C-terminal region) with SH3KBP1/CIN85 (via SH3 domains); this interaction enhances MAP3K4-induced phosphorylation of ZFP36 at Ser-66 and Ser-93 and does not alter neither ZFP36 binding to ARE-containing transcripts nor TNF-alpha mRNA decay. Interacts with XRN1. Interacts (via C-terminus and Ser-186 phosphorylated form) with YWHAB; this interaction occurs in a p38/MAPKAPK2-dependent manner, increases cytoplasmic localization of ZFP36 and protects ZFP36 from Ser-186 dephosphorylation by serine/threonine phosphatase 2A, and hence may be crucial for stabilizing ARE-containing mRNAs. Interacts (via phosphorylated form) with YWHAE. Interacts (via C-terminus) with YWHAG; this interaction occurs in a phosphorylation-dependent manner. Interacts with YWHAH; this interaction occurs in a phosphorylation-dependent manner. Interacts with YWHAQ; this interaction occurs in a phosphorylation-dependent manner. Interacts with (via C-terminus) YWHAZ; this interaction occurs in a phosphorylation-dependent manner. Interacts (via P-P-P-P-G repeats) with GIGYF2; the interaction is direct. (Microbial infection) Interacts (via C-terminus) with HTLV-1 TAX (via C-terminus); this interaction inhibits HTLV-1 TAX to transactivate viral long terminal repeat (LTR) promoter. Phosphorylated. Phosphorylation at serine and/or threonine residues occurs in a p38 MAPK- and MAPKAPK2-dependent manner. Phosphorylated by MAPKAPK2 at Ser-60 and Ser-186; phosphorylation increases its stability and cytoplasmic localization, promotes binding to 14-3-3 adapter proteins and inhibits the recruitment of cytoplasmic CCR4-NOT and PAN2-PAN3 deadenylase complexes to the mRNA decay machinery, thereby inhibiting ZFP36-induced ARE-containing mRNA deadenylation and decay processes. Phosphorylation by MAPKAPK2 does not impair ARE-containing RNA-binding. Phosphorylated in a MAPKAPK2- and p38 MAPK-dependent manner upon skeletal muscle satellite cell activation; this phosphorylation inhibits ZFP36-mediated mRNA decay activity, and hence stabilizes MYOD1 mRNA. Phosphorylated by MAPK1 upon mitogen stimulation. Phosphorylated at Ser-66 and Ser-93; these phosphorylations increase in a SH3KBP1-dependent manner. Phosphorylated at serine and threonine residues in a pyruvate kinase PKM- and p38 MAPK-dependent manner. Phosphorylation at Ser-60 may participate in the PKM-mediated degradation of ZFP36 in a p38 MAPK-dependent manner. Dephosphorylated by serine/threonine phosphatase 2A at Ser-186. Post-translationally, ubiquitinated; pyruvate kinase (PKM)-dependent ubiquitination leads to proteasomal degradation through a p38 MAPK signaling pathway. In terms of tissue distribution, expressed in both basal and suprabasal epidermal layers. Expressed in epidermal keratinocytes. Expressed strongly in mature dendritic cells. Expressed in immature dendritic cells (at protein level).

Its subcellular location is the nucleus. The protein resides in the cytoplasm. The protein localises to the cytoplasmic granule. It localises to the P-body. Functionally, zinc-finger RNA-binding protein that destabilizes several cytoplasmic AU-rich element (ARE)-containing mRNA transcripts by promoting their poly(A) tail removal or deadenylation, and hence provide a mechanism for attenuating protein synthesis. Acts as an 3'-untranslated region (UTR) ARE mRNA-binding adapter protein to communicate signaling events to the mRNA decay machinery. Recruits deadenylase CNOT7 (and probably the CCR4-NOT complex) via association with CNOT1, and hence promotes ARE-mediated mRNA deadenylation. Functions also by recruiting components of the cytoplasmic RNA decay machinery to the bound ARE-containing mRNAs. Self regulates by destabilizing its own mRNA. Binds to 3'-UTR ARE of numerous mRNAs and of its own mRNA. Plays a role in anti-inflammatory responses; suppresses tumor necrosis factor (TNF)-alpha production by stimulating ARE-mediated TNF-alpha mRNA decay and several other inflammatory ARE-containing mRNAs in interferon (IFN)- and/or lipopolysaccharide (LPS)-induced macrophages. Also plays a role in the regulation of dendritic cell maturation at the post-transcriptional level, and hence operates as part of a negative feedback loop to limit the inflammatory response. Promotes ARE-mediated mRNA decay of hypoxia-inducible factor HIF1A mRNA during the response of endothelial cells to hypoxia. Positively regulates early adipogenesis of preadipocytes by promoting ARE-mediated mRNA decay of immediate early genes (IEGs). Negatively regulates hematopoietic/erythroid cell differentiation by promoting ARE-mediated mRNA decay of the transcription factor STAT5B mRNA. Plays a role in maintaining skeletal muscle satellite cell quiescence by promoting ARE-mediated mRNA decay of the myogenic determination factor MYOD1 mRNA. Associates also with and regulates the expression of non-ARE-containing target mRNAs at the post-transcriptional level, such as MHC class I mRNAs. Participates in association with argonaute RISC catalytic components in the ARE-mediated mRNA decay mechanism; assists microRNA (miRNA) targeting ARE-containing mRNAs. May also play a role in the regulation of cytoplasmic mRNA decapping; enhances decapping of ARE-containing RNAs, in vitro. Involved in the delivery of target ARE-mRNAs to processing bodies (PBs). In addition to its cytosolic mRNA-decay function, affects nuclear pre-mRNA processing. Negatively regulates nuclear poly(A)-binding protein PABPN1-stimulated polyadenylation activity on ARE-containing pre-mRNA during LPS-stimulated macrophages. Also involved in the regulation of stress granule (SG) and P-body (PB) formation and fusion. Plays a role in the regulation of keratinocyte proliferation, differentiation and apoptosis. Plays a role as a tumor suppressor by inhibiting cell proliferation in breast cancer cells. Its function is as follows. (Microbial infection) Negatively regulates HTLV-1 TAX-dependent transactivation of viral long terminal repeat (LTR) promoter. The sequence is that of mRNA decay activator protein ZFP36 from Homo sapiens (Human).